A 208-amino-acid chain; its full sequence is Interleukin-6 (208 aa).

The signal sequence occupies residues 1–29; sequence MNSRFTSAFTPFAVSLGLLLVMTSAFPTP. An N-linked (GlcNAc...) asparagine glycan is attached at N38. A disulfide bond links C72 and C78. Position 81 is a phosphoserine (S81). Cysteines 101 and 111 form a disulfide.

This sequence belongs to the IL-6 superfamily. Component of a hexamer of two molecules each of IL6, IL6R and IL6ST; first binds to IL6R to associate with the signaling subunit IL6ST. Interacts with IL6R (via the N-terminal ectodomain); this interaction may be affected by IL6R-binding with SORL1, hence decreasing IL6 cis signaling. Interacts with SORL1 (via the N-terminal ectodomain); this interaction leads to IL6 internalization and lysosomal degradation. May form a trimeric complex with the soluble SORL1 ectodomain and soluble IL6R receptor; this interaction might stabilize circulating IL6, hence promoting IL6 trans signaling.

It is found in the secreted. Its function is as follows. Cytokine with a wide variety of biological functions in immunity, tissue regeneration, and metabolism. Binds to IL6R, then the complex associates to the signaling subunit IL6ST/gp130 to trigger the intracellular IL6-signaling pathway. The interaction with the membrane-bound IL6R and IL6ST stimulates 'classic signaling', whereas the binding of IL6 and soluble IL6R to IL6ST stimulates 'trans-signaling'. Alternatively, 'cluster signaling' occurs when membrane-bound IL6:IL6R complexes on transmitter cells activate IL6ST receptors on neighboring receiver cells. Functionally, IL6 is a potent inducer of the acute phase response. Rapid production of IL6 contributes to host defense during infection and tissue injury, but excessive IL6 synthesis is involved in disease pathology. In the innate immune response, is synthesized by myeloid cells, such as macrophages and dendritic cells, upon recognition of pathogens through toll-like receptors (TLRs) at the site of infection or tissue injury. In the adaptive immune response, is required for the differentiation of B cells into immunoglobulin-secreting cells. Plays a major role in the differentiation of CD4(+) T cell subsets. Essential factor for the development of T follicular helper (Tfh) cells that are required for the induction of germinal-center formation. Required to drive naive CD4(+) T cells to the Th17 lineage. Also required for proliferation of myeloma cells and the survival of plasmablast cells. Acts as an essential factor in bone homeostasis and on vessels directly or indirectly by induction of VEGF, resulting in increased angiogenesis activity and vascular permeability. Induces, through 'trans-signaling' and synergistically with IL1B and TNF, the production of VEGF. Involved in metabolic controls, is discharged into the bloodstream after muscle contraction increasing lipolysis and improving insulin resistance. 'Trans-signaling' in central nervous system also regulates energy and glucose homeostasis. Mediates, through GLP-1, crosstalk between insulin-sensitive tissues, intestinal L cells and pancreatic islets to adapt to changes in insulin demand. Also acts as a myokine. Plays a protective role during liver injury, being required for maintenance of tissue regeneration. Also has a pivotal role in iron metabolism by regulating HAMP/hepcidin expression upon inflammation or bacterial infection. Through activation of IL6ST-YAP-NOTCH pathway, induces inflammation-induced epithelial regeneration. The sequence is that of Interleukin-6 (IL6) from Bubalus bubalis (Domestic water buffalo).